A 118-amino-acid chain; its full sequence is Small ribosomal subunit protein uS13 (118 aa).

Residues 91–118 form a disordered region; it reads HRRGLPVRGQRTRTNARTRKGPRRPIKK.

Belongs to the universal ribosomal protein uS13 family. Part of the 30S ribosomal subunit. Forms a loose heterodimer with protein S19. Forms two bridges to the 50S subunit in the 70S ribosome.

Located at the top of the head of the 30S subunit, it contacts several helices of the 16S rRNA. In the 70S ribosome it contacts the 23S rRNA (bridge B1a) and protein L5 of the 50S subunit (bridge B1b), connecting the 2 subunits; these bridges are implicated in subunit movement. Contacts the tRNAs in the A and P-sites. The sequence is that of Small ribosomal subunit protein uS13 from Methylococcus capsulatus (strain ATCC 33009 / NCIMB 11132 / Bath).